The sequence spans 117 residues: Non-specific lipid-transfer protein (117 aa).

A signal peptide spans 1–26 (MASSAVIKLACAVLLCIVVAAPYAEA). Cystine bridges form between Cys-30–Cys-76, Cys-40–Cys-53, Cys-54–Cys-99, and Cys-74–Cys-113.

The protein belongs to the plant LTP family.

In terms of biological role, plant non-specific lipid-transfer proteins transfer phospholipids as well as galactolipids across membranes. May play a role in wax or cutin deposition in the cell walls of expanding epidermal cells and certain secretory tissues. The sequence is that of Non-specific lipid-transfer protein from Spinacia oleracea (Spinach).